Reading from the N-terminus, the 201-residue chain is Probable quinol oxidase subunit 3 (201 aa).

Helical transmembrane passes span 20–40, 62–82, 91–111, 133–153, and 172–192; these read LGFW…FATL, LVLI…ISIY, LMMF…GFEI, FFIL…WIIC, and FIVS…FTAV.

It belongs to the cytochrome c oxidase subunit 3 family.

Its subcellular location is the cell membrane. It catalyses the reaction 2 a quinol + O2 = 2 a quinone + 2 H2O. Catalyzes quinol oxidation with the concomitant reduction of oxygen to water. The polypeptide is Probable quinol oxidase subunit 3 (qoxC) (Staphylococcus haemolyticus (strain JCSC1435)).